The sequence spans 124 residues: Small ribosomal subunit protein uS12 (124 aa).

The interval 9 to 28 is disordered; that stretch reads KSERTVQKNQTKSPALDSCP. Position 89 is a 3-methylthioaspartic acid (aspartate 89).

It belongs to the universal ribosomal protein uS12 family. Part of the 30S ribosomal subunit. Contacts proteins S8 and S17. May interact with IF1 in the 30S initiation complex.

Its function is as follows. With S4 and S5 plays an important role in translational accuracy. Interacts with and stabilizes bases of the 16S rRNA that are involved in tRNA selection in the A site and with the mRNA backbone. Located at the interface of the 30S and 50S subunits, it traverses the body of the 30S subunit contacting proteins on the other side and probably holding the rRNA structure together. The combined cluster of proteins S8, S12 and S17 appears to hold together the shoulder and platform of the 30S subunit. In Bdellovibrio bacteriovorus (strain ATCC 15356 / DSM 50701 / NCIMB 9529 / HD100), this protein is Small ribosomal subunit protein uS12.